Consider the following 370-residue polypeptide: DNA replication and repair protein RecF (370 aa).

Position 30 to 37 (30 to 37 (GQNGMGKT)) interacts with ATP.

The protein belongs to the RecF family.

Its subcellular location is the cytoplasm. Functionally, the RecF protein is involved in DNA metabolism; it is required for DNA replication and normal SOS inducibility. RecF binds preferentially to single-stranded, linear DNA. It also seems to bind ATP. In Bacteroides fragilis (strain ATCC 25285 / DSM 2151 / CCUG 4856 / JCM 11019 / LMG 10263 / NCTC 9343 / Onslow / VPI 2553 / EN-2), this protein is DNA replication and repair protein RecF.